Here is a 165-residue protein sequence, read N- to C-terminus: Bark lectin isoform 1 (165 aa).

2 N-linked (GlcNAc...) asparagine glycosylation sites follow: Asn-27 and Asn-57. 2 disulfide bridges follow: Cys-33–Cys-80 and Cys-126–Cys-133.

This sequence belongs to the protease inhibitor I3 (leguminous Kunitz-type inhibitor) family. Dimer.

In terms of biological role, glucose and N-acetylglucosamine binding lectin. Has hemagglutinating activity against human and rabbit erythrocytes which does not require divalent cations. Inhibits factor Xa and, to a lesser extent, trypsin. Does not inhibit neutrophil elastase, human plasma kallikrein, papain, human plasmin, porcine pancreatic kallikrein and bovin chymotrypsin. Has insecticidal activity against the termite species N.corniger. Induces apoptosis in prostrate cancer cell lines DU145 and PC3. In Crateva tapia (Garlic-pear tree), this protein is Bark lectin isoform 1.